Here is a 227-residue protein sequence, read N- to C-terminus: tRNA (guanine-N(7)-)-methyltransferase (227 aa).

Glu-58, Glu-83, Asp-110, and Asp-132 together coordinate S-adenosyl-L-methionine. Residue Asp-132 is part of the active site. Substrate is bound by residues Lys-136, Asp-168, and Thr-205 to Glu-208.

Belongs to the class I-like SAM-binding methyltransferase superfamily. TrmB family.

The enzyme catalyses guanosine(46) in tRNA + S-adenosyl-L-methionine = N(7)-methylguanosine(46) in tRNA + S-adenosyl-L-homocysteine. It functions in the pathway tRNA modification; N(7)-methylguanine-tRNA biosynthesis. In terms of biological role, catalyzes the formation of N(7)-methylguanine at position 46 (m7G46) in tRNA. This is tRNA (guanine-N(7)-)-methyltransferase from Acidithiobacillus ferrooxidans (strain ATCC 23270 / DSM 14882 / CIP 104768 / NCIMB 8455) (Ferrobacillus ferrooxidans (strain ATCC 23270)).